The chain runs to 493 residues: Glycylpeptide N-tetradecanoyltransferase (493 aa).

Residues Met1–Ala30 form a disordered region. Residues Phe82–Trp85, Leu216–Ile218, and Ser224–Ala228 contribute to the tetradecanoyl-CoA site. Leu493 acts as the Proton acceptor; via carboxylate in catalysis.

Belongs to the NMT family. As to quaternary structure, monomer.

The protein resides in the cytoplasm. It carries out the reaction N-terminal glycyl-[protein] + tetradecanoyl-CoA = N-tetradecanoylglycyl-[protein] + CoA + H(+). In terms of biological role, adds a myristoyl group to the N-terminal glycine residue of certain cellular proteins. The chain is Glycylpeptide N-tetradecanoyltransferase (swoF) from Emericella nidulans (strain FGSC A4 / ATCC 38163 / CBS 112.46 / NRRL 194 / M139) (Aspergillus nidulans).